Consider the following 95-residue polypeptide: Integration host factor subunit beta (95 aa).

It belongs to the bacterial histone-like protein family. In terms of assembly, heterodimer of an alpha and a beta chain.

Its function is as follows. This protein is one of the two subunits of integration host factor, a specific DNA-binding protein that functions in genetic recombination as well as in transcriptional and translational control. This is Integration host factor subunit beta from Shewanella loihica (strain ATCC BAA-1088 / PV-4).